A 183-amino-acid polypeptide reads, in one-letter code: A-type ATP synthase subunit E (183 aa).

The protein belongs to the V-ATPase E subunit family. In terms of assembly, has multiple subunits with at least A(3), B(3), C, D, E, F, H, I and proteolipid K(x).

The protein localises to the cell membrane. Functionally, component of the A-type ATP synthase that produces ATP from ADP in the presence of a proton gradient across the membrane. This Methanococcoides burtonii (strain DSM 6242 / NBRC 107633 / OCM 468 / ACE-M) protein is A-type ATP synthase subunit E.